The following is a 2219-amino-acid chain: MEEDIACVKDLVSKYLADNERLSRQKLAFLVQTEPRMLLMEGLKLLSLCIEIDSCNANGCEHNSEDKSVERILHDHGILTPSLCFVVPDGYKLTGNVLILLECFVRSSPANFEQKYIEDFKKLEQLKEDLKTVNISLIPLIDGRTSFYNEQIPDWVNDKLRDTLFSLLRYAQESNSLFEESEYSRLCESLSMTSGRLSGVESLNVLLDNRSNHYEEVIASCHQGINNKLTAHEVKLQIEEEYQVFRNRLRKGEIESQFLKVEKSRLLNEFNDLYMDKVSTTEDDVEYLIHQFKRASPILRFLYANVGKEANEKSDQTIKECQMQYWRSFLNKVKSLRILNTRRKLLLIFDVLILLASKYDQMKYKSLRGWLGSCFISVNDRLVSLESTKRDLKKWVERRQQAEMSKTMQSSQCSNKNQILNSMLQKTILKATTALKDVGISVDQYKVDMEIMCPNCYDSVMDFDVSGITPTISYQRSEEEKFPYIMGSVELLETVDLERLSSLSLALVNSMKTSSTVKLRQNEFGPARYQVVRCREAYCQEFSLGDTEFQLVYQKTGECSKCYAINDNRVGEICSFYADPKRYFPAIFSAEVLQATVGTMISWIEDCSELEGQLHNIRSLTKMILVLILTHPSKRSQKLLQNLRYFIMAYVSDFYHKDLIDKIREELITDTEFLLYRLVRALMGLILSENVKSMMTNRFKFILNISYMCHFITKETPDRLTDQIKCFEKFLEPKVKFGHVSINPADIATEEELDDMIYNAKKFLNKDGCTSAKGPDYKRPGVSKKFLSLLTSSFNNGSLFKEKEVKKDIKDPLITSGCATALDLASNKSVVVNKYTDGSRVLNYDFNKLTALAVSQLTEVFSRKGKHLLNKQDYEYKVQQAMSNLVLGSRQHKTDADEADLDEILLDGGASVYFDQLRETVEKIVDQYREPVKPGSGPDDDGQPSVNDLDEVISNKFHIRLIKGELSNHMVEDFDHDVLPDKFYKEFCDAVYENDKLKERYFYCGHMSQCPIGELTKAVTTRTYFDHEYFQCFKSILLKMNANTLMGRYTHYKSRNLNFKFDMGKLSDDVRISERESNSEALSKALSLTNCTTAMLKNLCFYSQESPQSYNSVGPDTGRLKFSLSYKEQVGGNRELYIGDLRTKMFTRLIEDYFEALSLQLSGSCLNNEKEFENAILSMKLNVSLAHVSYSMDHSKWGPMMCPFLFLAVLQNLIFLSKDLQADIKGRDYLSTLLMWHMHKMVEIPFNVVSAMMKSFIKAQLGLRKKTTQSITEDFFYSSFQVGVVPSHVSSILDMGQGILHNTSDFYALISERFINYAISCICGGVVDAYTSSDDQISLFDQTLTELLQRDPDEFKTLMDFHYYMSDQLNKFVSPKSVIGRFVAEFKSRFFVWGDEVPLLTKFVAAALHNIKCKEPHQLAETIDTIIDQSVANGVPVHLCNLIQMRTLSLLQYARYPIDPFLLNCETDVRDWVDGNRSYRIMRQIEGLIPDACSKIRSMLRKLYNRLKTGQLHEEFTTNYLSSEHLSSLRNLCELLGVEPPSESDLEFSWLNLAAHHPLRMVLRQKIIYSGAVNLDDEKVPTIVKTIQNKLSSTFTRGAQKLLSEAINKSAFQSSIASGFVGLCRTLGSKCVRGPNKENLYIKSIQSLISGTQGIELLTNSYGVQYWRVPLNLRSENESVVSYFRPLLWDYMCISLSTAIELGAWVLGEPKMTKALEFFKHNPCDYFPLKPTASKLLEDRIGLNHIIHSLRRLYPSVFEKHILPFMSDLASTKMKWSPRIKFLDLCVALDVSCEALSLVSHIVKWKREEHYIVLSSELRLSHTRTHEPMVEERVVSTSDAVDNFMRQIYFESYVRPFVATTRTLGSFTWFPHKTSIPEGEGLQRLGPFSSFVEKVIHKGVERPMFKHDLMMGYAWIDFDIEPARLNQNQLIASGLVSTKFDSLEDFFDAVASLPSGSTRLSQTVRFRIKSQDASFKETFAIHLDYTGSMNQQTKYLVHDVTVMYSGAVNPCVLLDCWRLVMSGSTFKGKSAWYVDTEVINEFLIDTNQLGHVTPVEIVVDAEKLQFTEYDFVLVGPCTEPAPLVVHKGGLWECGKKLASFTPVIQDQDLEMFVKEVGDTSSDLLTEALSAMMLDRLGLKMQWSGVDIVSTLKAAVPQSMEILGAVLEAVDNWVEFKGYALCYSKSRRRIMVQSSGGKLRLKGRTCEELIERDEHIEDIE.

Positions 26 to 289 are endonuclease; sequence KLAFLVQTEP…TTEDDVEYLI (264 aa). Positions 51, 89, and 102 each coordinate Mn(2+). Lys115 is a catalytic residue. The RdRp catalytic domain occupies 1177 to 1373; sequence LSMKLNVSLA…YMSDQLNKFV (197 aa). Asp1335 serves as a coordination point for Mg(2+).

The protein belongs to the Bunyavirales RNA polymerase family. In terms of assembly, homomultimer; the oligomeric structure is essential for the polymerase activity. Interacts with nucleoprotein N. Interacts with protein Z; this interaction inhibits viral transcription and replication, Z partially blocks the product exit tunnel for the releasing nascent RNA product. Mn(2+) serves as cofactor. Requires Mg(2+) as cofactor.

It localises to the virion. The protein resides in the host cytoplasm. The enzyme catalyses RNA(n) + a ribonucleoside 5'-triphosphate = RNA(n+1) + diphosphate. Its function is as follows. RNA-dependent RNA polymerase, which is responsible for the replication and transcription of the viral RNA genome using antigenomic RNA as an intermediate. During transcription, synthesizes subgenomic RNAs and assures their capping by a cap-snatching mechanism, which involves the endonuclease activity cleaving the host capped pre-mRNAs. These short capped RNAs are then used as primers for viral transcription. The 3'-end of subgenomic mRNAs molecules are heterogeneous and not polyadenylated. The replicase function is to direct synthesis of antigenomic and genomic RNA which are encapsidated and non capped. As a consequence of the use of the same enzyme for both transcription and replication, these mechanisms need to be well coordinated. These processes may be regulated by proteins N and Z in a dose-dependent manner. Z protein inhibits the viral polymerase L und thus the viral transcription and RNA synthesis. This is RNA-directed RNA polymerase L from Homo sapiens (Human).